We begin with the raw amino-acid sequence, 366 residues long: Chorismate synthase (366 aa).

2 residues coordinate NADP(+): Arg48 and Arg54. FMN contacts are provided by residues Arg125–Ser127, Asn238–Ala239, Gly278, Lys293–Ser297, and Arg319.

The protein belongs to the chorismate synthase family. As to quaternary structure, homotetramer. Requires FMNH2 as cofactor.

It catalyses the reaction 5-O-(1-carboxyvinyl)-3-phosphoshikimate = chorismate + phosphate. Its pathway is metabolic intermediate biosynthesis; chorismate biosynthesis; chorismate from D-erythrose 4-phosphate and phosphoenolpyruvate: step 7/7. In terms of biological role, catalyzes the anti-1,4-elimination of the C-3 phosphate and the C-6 proR hydrogen from 5-enolpyruvylshikimate-3-phosphate (EPSP) to yield chorismate, which is the branch point compound that serves as the starting substrate for the three terminal pathways of aromatic amino acid biosynthesis. This reaction introduces a second double bond into the aromatic ring system. The sequence is that of Chorismate synthase from Ralstonia pickettii (strain 12J).